Here is a 526-residue protein sequence, read N- to C-terminus: Peptide chain release factor 3 (526 aa).

The tr-type G domain occupies 9–277; sequence DKRRTFAIIS…GIVEWAPKPL (269 aa). Residues 18-25, 86-90, and 140-143 contribute to the GTP site; these read SHPDAGKT, DTPGH, and NKLD.

It belongs to the TRAFAC class translation factor GTPase superfamily. Classic translation factor GTPase family. PrfC subfamily.

The protein localises to the cytoplasm. Functionally, increases the formation of ribosomal termination complexes and stimulates activities of RF-1 and RF-2. It binds guanine nucleotides and has strong preference for UGA stop codons. It may interact directly with the ribosome. The stimulation of RF-1 and RF-2 is significantly reduced by GTP and GDP, but not by GMP. In Shewanella sp. (strain MR-4), this protein is Peptide chain release factor 3.